The following is a 139-amino-acid chain: Glucanase inhibitor protein 3 (139 aa).

One can recognise a Peptidase S1 domain in the interval 1-138 (VLTLEKPSKF…GIEWINSVIK (138 aa)). 2 disulfides stabilise this stretch: C61–C73 and C83–C114.

Belongs to the peptidase S1 family.

The protein localises to the secreted. Secreted effector that suppresses host plant glucan elicitor-mediated defense responses. Targets host endoglucanases and inhibits the endoglucanase-mediated release of elicitor-active glucan oligosaccharides from P.sojae cell walls. The sequence is that of Glucanase inhibitor protein 3 from Phytophthora sojae (Soybean stem and root rot agent).